The primary structure comprises 266 residues: 15-hydroxyprostaglandin dehydrogenase [NAD(+)] (266 aa).

Residues 12 to 20 (GAAQGIGKA), 36 to 37 (DW), 63 to 65 (CDV), and Asn-91 contribute to the NAD(+) site. The substrate site is built by Ser-138 and Gln-148. Tyr-151 (proton acceptor) is an active-site residue. Residues 151 to 155 (YCASK) and 186 to 188 (VKT) contribute to the NAD(+) site.

This sequence belongs to the short-chain dehydrogenases/reductases (SDR) family. Homodimer.

The protein localises to the cytoplasm. It carries out the reaction prostaglandin E2 + NAD(+) = 15-oxoprostaglandin E2 + NADH + H(+). The catalysed reaction is (15S)-hydroxy-(5Z,8Z,11Z,13E)-eicosatetraenoate + NAD(+) = 15-oxo-(5Z,8Z,11Z,13E)-eicosatetraenoate + NADH + H(+). It catalyses the reaction (11R)-hydroxy-(5Z,8Z,12E,14Z)-eicosatetraenoate + NAD(+) = 11-oxo-(5Z,8Z,12E,14Z)-eicosatetraenoate + NADH + H(+). The enzyme catalyses lipoxin A4 + NAD(+) = 15-oxo-(5S,6R)-dihydroxy-(7E,9E,11Z,13E)-eicosatetraenoate + NADH + H(+). It carries out the reaction 15-oxo-(5S,6R)-dihydroxy-(7E,9E,11Z)-eicosatrienoate + NADH + H(+) = (5S,6R,15S)-trihydroxy-(7E,9E,11Z)-eicosatrienoate + NAD(+). The catalysed reaction is prostaglandin A1 + NAD(+) = 15-oxo-prostaglandin A1 + NADH + H(+). It catalyses the reaction prostaglandin E1 + NAD(+) = 15-oxoprostaglandin E1 + NADH + H(+). The enzyme catalyses 14-hydroxy-(4Z,7Z,10Z,12E,16Z,19Z)-docosahexaenoate + NAD(+) = 14-oxo-(4Z,7Z,10Z,12E,16Z,19Z)-docosahexaenoate + NADH + H(+). It carries out the reaction resolvin E1 + NAD(+) = 18-oxo-resolvin E1 + NADH + H(+). The catalysed reaction is resolvin D1 + NAD(+) = 8-oxoresolvin D1 + NADH + H(+). It catalyses the reaction resolvin D1 + NAD(+) = 17-oxoresolvin D1 + NADH + H(+). The enzyme catalyses resolvin D2 + NAD(+) = 7-oxoresolvin D2 + NADH + H(+). It carries out the reaction resolvin D2 + NAD(+) = 16-oxoresolvin D2 + NADH + H(+). Catalyzes the NAD-dependent dehydrogenation (oxidation) of a broad array of hydroxylated polyunsaturated fatty acids (mainly eicosanoids and docosanoids, including prostaglandins, lipoxins and resolvins), yielding their corresponding keto (oxo) metabolites. Decreases the levels of the pro-proliferative prostaglandins such as prostaglandin E2 (whose activity is increased in cancer because of an increase in the expression of cyclooxygenase 2) and generates oxo-fatty acid products that can profoundly influence cell function by abrogating pro-inflammatory cytokine expression. Converts resolvins E1, D1 and D2 to their oxo products, which represents a mode of resolvin inactivation. Resolvin E1 plays important roles during the resolution phase of acute inflammation, while resolvins D1 and D2 have a unique role in obesity-induced adipose inflammation. The polypeptide is 15-hydroxyprostaglandin dehydrogenase [NAD(+)] (Hpgd) (Rattus norvegicus (Rat)).